The primary structure comprises 1116 residues: Large proline-rich protein bag6-B (1116 aa).

One can recognise a Ubiquitin-like domain in the interval 7–82 (MDVTVKTLDS…HLVERAPPQT (76 aa)). Disordered stretches follow at residues 76 to 114 (ERAPPQTQTSTSGPSTSSSTSPSSSNAAPVPGAPERNGN), 170 to 221 (EGQP…PSEY), 329 to 385 (STTG…HPHP), 473 to 502 (PAAPSFNFQPGAAATTPPAPGGATTTAPGA), 533 to 589 (GGSS…GTDQ), 640 to 678 (VPVSTSPPQSASQAPPPPSSPAPPAHSAPPPAAAPESLP), and 1058 to 1080 (TGAKPESSTECVKRELDNSEAQG). Positions 79–100 (PPQTQTSTSGPSTSSSTSPSSS) are enriched in low complexity. Polar residues predominate over residues 194 to 207 (RETLPQTTQNADGQ). Positions 208 to 219 (SNSTPTSHPSPS) are enriched in low complexity. Positions 344 to 353 (GNATPSTNTS) are enriched in polar residues. 3 stretches are compositionally biased toward low complexity: residues 482–502 (PGAAATTPPAPGGATTTAPGA), 535–580 (SSTS…SVPS), and 641–652 (PVSTSPPQSASQ). Positions 653–672 (APPPPSSPAPPAHSAPPPAA) are enriched in pro residues. Over residues 1068-1080 (CVKRELDNSEAQG) the composition is skewed to basic and acidic residues.

Component of the bag6/bat3 complex.

The protein resides in the cytoplasm. It is found in the cytosol. It localises to the nucleus. The protein localises to the secreted. Its subcellular location is the extracellular exosome. Its function is as follows. ATP-independent molecular chaperone preventing the aggregation of misfolded and hydrophobic patches-containing proteins. Functions as part of a cytosolic protein quality control complex, the bag6/bat3 complex, which maintains these client proteins in a soluble state and participates in their proper delivery to the endoplasmic reticulum or alternatively can promote their sorting to the proteasome where they undergo degradation. The bag6/bat3 complex is involved in the post-translational delivery of tail-anchored/type II transmembrane proteins to the endoplasmic reticulum membrane. Similarly, the bag6/bat3 complex also functions as a sorting platform for proteins of the secretory pathway that are mislocalized to the cytosol either delivering them to the proteasome for degradation or to the endoplasmic reticulum. The bag6/bat3 complex also plays a role in the endoplasmic reticulum-associated degradation (ERAD), a quality control mechanism that eliminates unwanted proteins of the endoplasmic reticulum through their retrotranslocation to the cytosol and their targeting to the proteasome. It maintains these retrotranslocated proteins in an unfolded yet soluble state condition in the cytosol to ensure their proper delivery to the proteasome. Also required for selective ubiquitin-mediated degradation of defective nascent chain polypeptides by the proteasome. Also involved in endoplasmic reticulum stress-induced pre-emptive quality control, a mechanism that selectively attenuates the translocation of newly synthesized proteins into the endoplasmic reticulum and reroutes them to the cytosol for proteasomal degradation. May ensure the proper degradation of these proteins and thereby protects the endoplasmic reticulum from protein overload upon stress. By stabilizing a large spectrum of proteins, may indirectly affect different biological processes including apoptosis. By controlling the steady-state expression of the IGF1R receptor, indirectly regulates the insulin-like growth factor receptor signaling pathway. When nuclear, may also act as a component of some chromatin regulator complex. The polypeptide is Large proline-rich protein bag6-B (Xenopus laevis (African clawed frog)).